Reading from the N-terminus, the 967-residue chain is Zinc finger protein with KRAB and SCAN domains 2 (967 aa).

Lys22 participates in a covalent cross-link: Glycyl lysine isopeptide (Lys-Gly) (interchain with G-Cter in SUMO2). Residues 45-127 (RKCFRQFCYE…ALVVHLEKET (83 aa)) form the SCAN box domain. Residues 150–205 (WEVADFQPEQVETQPRAVSREEPGSLHSGHQEQLNRKRERRPLPKNARPSPWVPAL) form a disordered region. The span at 167-185 (VSREEPGSLHSGHQEQLNR) shows a compositional bias: basic and acidic residues. A KRAB domain is found at 229 to 300 (VKDVHVARGF…GLHSSNKRSI (72 aa)). Glycyl lysine isopeptide (Lys-Gly) (interchain with G-Cter in SUMO2) cross-links involve residues Lys242, Lys259, Lys277, Lys337, Lys482, and Lys529. Low complexity predominate over residues 586–602 (RASAPSPSTPEEVPSPS). The interval 586–626 (RASAPSPSTPEEVPSPSRQERGGIEVEPQEPTGWEPEETSQ) is disordered. 2 positions are modified to phosphoserine: Ser591 and Ser600. Glycyl lysine isopeptide (Lys-Gly) (interchain with G-Cter in SUMO2) cross-links involve residues Lys734, Lys745, and Lys752. 6 consecutive C2H2-type zinc fingers follow at residues 775–797 (YKCG…QRIH), 803–825 (FKCL…QRIH), 831–853 (YRCG…QRTH), 859–881 (YQCG…RRVH), 887–909 (YKCV…RRIH), and 915–937 (YGCA…REVH). Positions 941-967 (KPLPHPPSLYCPENPHKGKTDEFRKTF) are disordered. Basic and acidic residues predominate over residues 954–967 (NPHKGKTDEFRKTF).

This sequence belongs to the krueppel C2H2-type zinc-finger protein family.

It is found in the nucleus. Its function is as follows. May be involved in transcriptional regulation. This chain is Zinc finger protein with KRAB and SCAN domains 2 (ZKSCAN2), found in Homo sapiens (Human).